Here is a 118-residue protein sequence, read N- to C-terminus: Large ribosomal subunit protein bL20 (118 aa).

The protein belongs to the bacterial ribosomal protein bL20 family.

Binds directly to 23S ribosomal RNA and is necessary for the in vitro assembly process of the 50S ribosomal subunit. It is not involved in the protein synthesizing functions of that subunit. This is Large ribosomal subunit protein bL20 from Synechococcus sp. (strain JA-2-3B'a(2-13)) (Cyanobacteria bacterium Yellowstone B-Prime).